An 87-amino-acid chain; its full sequence is Large ribosomal subunit protein bL31B (87 aa).

It belongs to the bacterial ribosomal protein bL31 family. Type B subfamily. In terms of assembly, part of the 50S ribosomal subunit.

The sequence is that of Large ribosomal subunit protein bL31B from Ralstonia nicotianae (strain ATCC BAA-1114 / GMI1000) (Ralstonia solanacearum).